An 883-amino-acid polypeptide reads, in one-letter code: DNA topoisomerase 1 (883 aa).

A Toprim domain is found at 2 to 126 (PKLVIVESPT…TKRMVFHEIT (125 aa)). Positions 8 and 95 each coordinate Mg(2+). The 443-residue stretch at 141–583 (DQRLVHAQET…QFYRGDRGLE (443 aa)) folds into the Topo IA-type catalytic domain. Residues 175–180 (SAGRVQ) are interaction with DNA. Residues 271–294 (SLEEKPTTRKPAPPFTTSTLQQES) are disordered. Catalysis depends on Y320, which acts as the O-(5'-phospho-DNA)-tyrosine intermediate. The disordered stretch occupies residues 842–883 (AKAGQAKAKGGRRSTGTPKSGETKARTTKTTKKTTTRRTTSR). Residues 867-883 (RTTKTTKKTTTRRTTSR) are compositionally biased toward basic residues.

Belongs to the type IA topoisomerase family. As to quaternary structure, monomer. It depends on Mg(2+) as a cofactor.

It catalyses the reaction ATP-independent breakage of single-stranded DNA, followed by passage and rejoining.. Releases the supercoiling and torsional tension of DNA, which is introduced during the DNA replication and transcription, by transiently cleaving and rejoining one strand of the DNA duplex. Introduces a single-strand break via transesterification at a target site in duplex DNA. The scissile phosphodiester is attacked by the catalytic tyrosine of the enzyme, resulting in the formation of a DNA-(5'-phosphotyrosyl)-enzyme intermediate and the expulsion of a 3'-OH DNA strand. The free DNA strand then undergoes passage around the unbroken strand, thus removing DNA supercoils. Finally, in the religation step, the DNA 3'-OH attacks the covalent intermediate to expel the active-site tyrosine and restore the DNA phosphodiester backbone. This chain is DNA topoisomerase 1, found in Synechococcus elongatus (strain ATCC 33912 / PCC 7942 / FACHB-805) (Anacystis nidulans R2).